We begin with the raw amino-acid sequence, 194 residues long: ATP-dependent Clp protease proteolytic subunit (194 aa).

Ser-99 (nucleophile) is an active-site residue. Residue His-124 is part of the active site.

Belongs to the peptidase S14 family. Fourteen ClpP subunits assemble into 2 heptameric rings which stack back to back to give a disk-like structure with a central cavity, resembling the structure of eukaryotic proteasomes.

It is found in the cytoplasm. The enzyme catalyses Hydrolysis of proteins to small peptides in the presence of ATP and magnesium. alpha-casein is the usual test substrate. In the absence of ATP, only oligopeptides shorter than five residues are hydrolyzed (such as succinyl-Leu-Tyr-|-NHMec, and Leu-Tyr-Leu-|-Tyr-Trp, in which cleavage of the -Tyr-|-Leu- and -Tyr-|-Trp bonds also occurs).. Functionally, cleaves peptides in various proteins in a process that requires ATP hydrolysis. Has a chymotrypsin-like activity. Plays a major role in the degradation of misfolded proteins. The polypeptide is ATP-dependent Clp protease proteolytic subunit (Borrelia garinii subsp. bavariensis (strain ATCC BAA-2496 / DSM 23469 / PBi) (Borreliella bavariensis)).